A 382-amino-acid polypeptide reads, in one-letter code: Flap endonuclease 1 (382 aa).

Residues Met-1–Arg-104 are N-domain. Mg(2+) is bound at residue Asp-34. Residues Arg-47 and Arg-70 each contribute to the DNA site. Asp-86 serves as a coordination point for Mg(2+). The tract at residues Gly-95–Gly-118 is disordered. The span at Glu-96–Thr-115 shows a compositional bias: basic and acidic residues. The segment at Asp-122–Tyr-253 is I-domain. The Mg(2+) site is built by Glu-158, Glu-160, Asp-179, and Asp-181. Residue Glu-158 participates in DNA binding. 2 residues coordinate DNA: Gly-231 and Asp-233. Asp-233 contacts Mg(2+). Residues Thr-336 to Phe-344 are interaction with PCNA. A disordered region spans residues Thr-353–Lys-382. Positions Asn-364–Asn-375 are enriched in polar residues.

This sequence belongs to the XPG/RAD2 endonuclease family. FEN1 subfamily. Interacts with PCNA. Three molecules of FEN1 bind to one PCNA trimer with each molecule binding to one PCNA monomer. PCNA stimulates the nuclease activity without altering cleavage specificity. Mg(2+) serves as cofactor. Phosphorylated. Phosphorylation upon DNA damage induces relocalization to the nuclear plasma.

The protein localises to the nucleus. The protein resides in the nucleolus. It is found in the nucleoplasm. It localises to the mitochondrion. Its function is as follows. Structure-specific nuclease with 5'-flap endonuclease and 5'-3' exonuclease activities involved in DNA replication and repair. During DNA replication, cleaves the 5'-overhanging flap structure that is generated by displacement synthesis when DNA polymerase encounters the 5'-end of a downstream Okazaki fragment. It enters the flap from the 5'-end and then tracks to cleave the flap base, leaving a nick for ligation. Also involved in the long patch base excision repair (LP-BER) pathway, by cleaving within the apurinic/apyrimidinic (AP) site-terminated flap. Acts as a genome stabilization factor that prevents flaps from equilibrating into structures that lead to duplications and deletions. Also possesses 5'-3' exonuclease activity on nicked or gapped double-stranded DNA, and exhibits RNase H activity. Also involved in replication and repair of rDNA and in repairing mitochondrial DNA. The protein is Flap endonuclease 1 of Glossina morsitans morsitans (Savannah tsetse fly).